The sequence spans 149 residues: Globin (149 aa).

Residues 2-149 enclose the Globin domain; the sequence is VLTKDEFDSL…KIFTGVAGQL (148 aa). Heme is bound at residue His-100.

Belongs to the globin family. As to quaternary structure, monomer.

Its function is as follows. Oxygen binding protein. The sequence is that of Globin from Isoparorchis hypselobagri (Giant trematode).